The following is a 371-amino-acid chain: Chorismate synthase (371 aa).

NADP(+) is bound by residues R48 and R54. Residues 131–133 (RSS), 245–246 (NA), G290, 305–309 (KPTSS), and R331 each bind FMN.

The protein belongs to the chorismate synthase family. Homotetramer. FMNH2 serves as cofactor.

It catalyses the reaction 5-O-(1-carboxyvinyl)-3-phosphoshikimate = chorismate + phosphate. The protein operates within metabolic intermediate biosynthesis; chorismate biosynthesis; chorismate from D-erythrose 4-phosphate and phosphoenolpyruvate: step 7/7. In terms of biological role, catalyzes the anti-1,4-elimination of the C-3 phosphate and the C-6 proR hydrogen from 5-enolpyruvylshikimate-3-phosphate (EPSP) to yield chorismate, which is the branch point compound that serves as the starting substrate for the three terminal pathways of aromatic amino acid biosynthesis. This reaction introduces a second double bond into the aromatic ring system. This Mesorhizobium japonicum (strain LMG 29417 / CECT 9101 / MAFF 303099) (Mesorhizobium loti (strain MAFF 303099)) protein is Chorismate synthase.